A 554-amino-acid chain; its full sequence is Dihydroxy-acid dehydratase (554 aa).

Asp-78 lines the Mg(2+) pocket. Cys-119 serves as a coordination point for [2Fe-2S] cluster. Residues Asp-120 and Lys-121 each coordinate Mg(2+). An N6-carboxylysine modification is found at Lys-121. [2Fe-2S] cluster is bound at residue Cys-192. Mg(2+) is bound at residue Glu-443. Ser-469 (proton acceptor) is an active-site residue.

The protein belongs to the IlvD/Edd family. Homodimer. Requires [2Fe-2S] cluster as cofactor. Mg(2+) serves as cofactor.

The catalysed reaction is (2R)-2,3-dihydroxy-3-methylbutanoate = 3-methyl-2-oxobutanoate + H2O. The enzyme catalyses (2R,3R)-2,3-dihydroxy-3-methylpentanoate = (S)-3-methyl-2-oxopentanoate + H2O. It participates in amino-acid biosynthesis; L-isoleucine biosynthesis; L-isoleucine from 2-oxobutanoate: step 3/4. The protein operates within amino-acid biosynthesis; L-valine biosynthesis; L-valine from pyruvate: step 3/4. Functionally, functions in the biosynthesis of branched-chain amino acids. Catalyzes the dehydration of (2R,3R)-2,3-dihydroxy-3-methylpentanoate (2,3-dihydroxy-3-methylvalerate) into 2-oxo-3-methylpentanoate (2-oxo-3-methylvalerate) and of (2R)-2,3-dihydroxy-3-methylbutanoate (2,3-dihydroxyisovalerate) into 2-oxo-3-methylbutanoate (2-oxoisovalerate), the penultimate precursor to L-isoleucine and L-valine, respectively. The polypeptide is Dihydroxy-acid dehydratase (Clostridium novyi (strain NT)).